The sequence spans 1203 residues: Cation-transporting ATPase catp-5 (1203 aa).

Over 1–68 (MNTSEREPLL…YAYKETIGRQ (68 aa)) the chain is Cytoplasmic. Residues 21 to 42 (TTDNPSTKIMKREKDNPKAKTT) are disordered. Residues 69-89 (ILFWLLTIVTLGFYQLLAYWV) traverse the membrane as a helical segment. Residues 90–209 (KSLFVKVRFQ…RKIYNMNALA (120 aa)) lie on the Extracellular side of the membrane. A helical membrane pass occupies residues 210 to 230 (LALTPILVILFKEVLGPFYLF). At 231–242 (QCFSVALWYSDN) the chain is on the cytoplasmic side. A helical membrane pass occupies residues 243–263 (YAYYASVIVIITVGSAAVAVY). Residues 264–297 (QMRAQEKRIRNMVGDTISVIVRRDGHDITIDASE) lie on the Extracellular side of the membrane. Residues 298–318 (IVPMDILILPSNTFILPCDCL) form a helical membrane-spanning segment. Topologically, residues 319-414 (LMNGTVIVNE…KPQEKEALKD (96 aa)) are cytoplasmic. The chain crosses the membrane as a helical span at residues 415–435 (VMVFILVLGFIALIGFIYTVI). Over 436–451 (EMVSRGESLKHIIIRS) the chain is Extracellular. The helical transmembrane segment at 452-472 (LDIITIVVPPALPAAMSVGII) threads the bilayer. Over 473-935 (NANSRLKKKK…KEGRCALVTS (463 aa)) the chain is Cytoplasmic. The 4-aspartylphosphate intermediate role is filled by D503. The segment at 595–617 (ETQDFDTVQPTVLRPPPEQATYH) is disordered. Mg(2+) contacts are provided by D883 and D887. A helical transmembrane segment spans residues 936-956 (YAVSKYMAAYSLNEFLSVMLL). Topologically, residues 957–962 (YNDGTN) are extracellular. The helical transmembrane segment at 963-983 (ISDGQFLYIDLVLITLVALFL) threads the bilayer. The Cytoplasmic portion of the chain corresponds to 984–1007 (GNTEASRKLSGIPPPRRLATSAFY). Residues 1008-1028 (FSVFGQMFFNIITQTTGYLLV) traverse the membrane as a helical segment. At 1029–1046 (RGQSWYVPNPEELDNTTT) the chain is on the extracellular side. A helical transmembrane segment spans residues 1047-1067 (MIGTTVFFTSCCMYLGYAFVY). At 1068 to 1085 (SKGHPYRRSVFTNWLLCG) the chain is on the cytoplasmic side. A helical membrane pass occupies residues 1086–1106 (IIFVIGAINMVMIFTNMGFLM). Residues 1107–1120 (NLMGFVYVPSTSMR) lie on the Extracellular side of the membrane. Residues 1121–1141 (FILLAISLAGVFLSLLYEHFF) traverse the membrane as a helical segment. Over 1142–1203 (VEKVVAIHFE…DRKETIESKC (62 aa)) the chain is Cytoplasmic.

Belongs to the cation transport ATPase (P-type) (TC 3.A.3) family. Type V subfamily. As to expression, expressed in the 20 intestinal cells and in the excretory cell.

It is found in the apical cell membrane. The catalysed reaction is ATP + H2O = ADP + phosphate + H(+). Functionally, involved in the uptake and/or transport of polyamines, probably through ATP hydrolysis. This contributes to the maintenance of intracellular polyamine levels. Polyamines are essential for cell proliferation and are implicated in cellular processes, ranging from DNA replication to apoptosis. The sequence is that of Cation-transporting ATPase catp-5 from Caenorhabditis elegans.